The following is a 666-amino-acid chain: MKQYAIQPATLEFNAEGTPVSRDFDDVYFSNDNGLEETRYVFLGGNRLAERFPVHSHPLFIVAESGFGTGLNFLTLWQAFNNFRSEHPQATLQRLHFVSFEKFPLTRDDLALTHQHWPELAPWAEQLQAQWPLPLAGCHRLLLDQGRVTLDLWFGDINELTDQLDATLNQKVDAWFLDGFAPAKNPDMWTPNLFNTMARLARPGATLATFTSAGFVRRGLQEAGFTMQKRKGFGRKREMLCGVMERCLTPTISAPWFYRSGSEKRETAIIGGGIASALLSLALLRRGWQVTLYCADDKPARGASGNQQGALYPLLSKHDAAINRFFPTAFTFARRLYDALPVSFDHDWCGVTQLGWDEKSQQKIARMLSLALPAGLASALNAEETTQAVGVTTRCGGITYPAGGWLCPEQLTRAVIALATEQGLQTRFRHTLTSLAAQKSQWQLRFASGEAASHDTVVLANGHQINRFDQTQPLPVYAVGGQVSHIPTTPALSALRQVLCYDGYLTPQNPNNRQHCIGASYHRGNESTVWREEDQRQNRQRLLDCFPDADWAKEVDVSDNSARCGVRCATRDHLPMVGNVPDYHATLTHYADLADNKASAVPAPVYPGLFMLGALGSRGLCSAPLCAEILAAQMSNEPIPLDASTLAALNPNRLWVRKLLKGKAVK.

Positions 1 to 245 are tRNA (mnm(5)s(2)U34)-methyltransferase; that stretch reads MKQYAIQPAT…KREMLCGVME (245 aa). Positions 270–666 are FAD-dependent cmnm(5)s(2)U34 oxidoreductase; that stretch reads IGGGIASALL…RKLLKGKAVK (397 aa).

This sequence in the N-terminal section; belongs to the methyltransferase superfamily. tRNA (mnm(5)s(2)U34)-methyltransferase family. It in the C-terminal section; belongs to the DAO family. FAD is required as a cofactor.

The protein localises to the cytoplasm. It carries out the reaction 5-aminomethyl-2-thiouridine(34) in tRNA + S-adenosyl-L-methionine = 5-methylaminomethyl-2-thiouridine(34) in tRNA + S-adenosyl-L-homocysteine + H(+). In terms of biological role, catalyzes the last two steps in the biosynthesis of 5-methylaminomethyl-2-thiouridine (mnm(5)s(2)U) at the wobble position (U34) in tRNA. Catalyzes the FAD-dependent demodification of cmnm(5)s(2)U34 to nm(5)s(2)U34, followed by the transfer of a methyl group from S-adenosyl-L-methionine to nm(5)s(2)U34, to form mnm(5)s(2)U34. The protein is tRNA 5-methylaminomethyl-2-thiouridine biosynthesis bifunctional protein MnmC of Salmonella arizonae (strain ATCC BAA-731 / CDC346-86 / RSK2980).